The primary structure comprises 411 residues: D-ribitol-5-phosphate cytidylyltransferase (411 aa).

The protein belongs to the IspD/TarI cytidylyltransferase family. IspD subfamily. In terms of assembly, homodimer.

The protein localises to the cytoplasm. Its subcellular location is the cytosol. It catalyses the reaction D-ribitol 5-phosphate + CTP + H(+) = CDP-L-ribitol + diphosphate. The enzyme catalyses D-ribose 5-phosphate + CTP + H(+) = CDP-D-ribose + diphosphate. It carries out the reaction D-ribulose 5-phosphate + CTP + H(+) = CDP-D-ribulose + diphosphate. It participates in protein modification; protein glycosylation. In terms of biological role, cytidylyltransferase required for protein O-linked mannosylation. Catalyzes the formation of CDP-ribitol nucleotide sugar from D-ribitol 5-phosphate. CDP-ribitol is a substrate of FKTN during the biosynthesis of the phosphorylated O-mannosyl trisaccharide (N-acetylgalactosamine-beta-3-N-acetylglucosamine-beta-4-(phosphate-6-)mannose), a carbohydrate structure present in alpha-dystroglycan (DAG1), which is required for binding laminin G-like domain-containing extracellular proteins with high affinity. Shows activity toward other pentose phosphate sugars and mediates formation of CDP-ribulose or CDP-ribose using CTP and ribulose-5-phosphate or ribose-5-phosphate, respectively. Not involved in dolichol production. The polypeptide is D-ribitol-5-phosphate cytidylyltransferase (crppa) (Xenopus tropicalis (Western clawed frog)).